We begin with the raw amino-acid sequence, 1199 residues long: DNA-directed RNA polymerase subunit beta' (1199 aa).

The Zn(2+) site is built by cysteine 60, cysteine 62, cysteine 75, and cysteine 78. Positions 449, 451, and 453 each coordinate Mg(2+). Positions 818, 892, 899, and 902 each coordinate Zn(2+).

This sequence belongs to the RNA polymerase beta' chain family. The RNAP catalytic core consists of 2 alpha, 1 beta, 1 beta' and 1 omega subunit. When a sigma factor is associated with the core the holoenzyme is formed, which can initiate transcription. It depends on Mg(2+) as a cofactor. Zn(2+) serves as cofactor.

It carries out the reaction RNA(n) + a ribonucleoside 5'-triphosphate = RNA(n+1) + diphosphate. DNA-dependent RNA polymerase catalyzes the transcription of DNA into RNA using the four ribonucleoside triphosphates as substrates. The polypeptide is DNA-directed RNA polymerase subunit beta' (Geobacillus kaustophilus (strain HTA426)).